Reading from the N-terminus, the 302-residue chain is Haloalkane dehalogenase (302 aa).

The region spanning 48–152 (PILLMHGEPS…VVVSNTGLPI (105 aa)) is the AB hydrolase-1 domain. The Nucleophile role is filled by Asp-123. Catalysis depends on Asp-249, which acts as the Proton donor. His-278 acts as the Proton acceptor in catalysis.

The protein belongs to the haloalkane dehalogenase family. Type 1 subfamily. In terms of assembly, monomer.

The catalysed reaction is 1-haloalkane + H2O = a halide anion + a primary alcohol + H(+). Catalyzes hydrolytic cleavage of carbon-halogen bonds in halogenated aliphatic compounds, leading to the formation of the corresponding primary alcohols, halide ions and protons. The sequence is that of Haloalkane dehalogenase from Caulobacter vibrioides (strain ATCC 19089 / CIP 103742 / CB 15) (Caulobacter crescentus).